We begin with the raw amino-acid sequence, 780 residues long: ATP-dependent 6-phosphofructokinase, muscle type (780 aa).

T2 is subject to N-acetylthreonine. Residues T2–H390 are N-terminal catalytic PFK domain 1. Residues G25, R88 to C89, and G118 to S121 contribute to the ATP site. Position 119 (D119) interacts with Mg(2+). Position 133 is a phosphoserine (S133). Residues S164–D166, R201, M208–R210, E264, R292, and H298–R301 each bind substrate. D166 acts as the Proton acceptor in catalysis. S377 carries the phosphoserine modification. The interval V391 to H401 is interdomain linker. Residues T402–V780 are C-terminal regulatory PFK domain 2. Residues R471 and T528–N532 contribute to the beta-D-fructose 2,6-bisphosphate site. S530 carries an O-linked (GlcNAc) serine glycan. K557 carries the post-translational modification N6-(2-hydroxyisobutyryl)lysine. Beta-D-fructose 2,6-bisphosphate is bound by residues R566, M573 to G575, E629, R655, and H661 to Q664. S667 carries the post-translational modification Phosphoserine. Position 735 (R735) interacts with beta-D-fructose 2,6-bisphosphate. S775 is modified (phosphoserine).

Belongs to the phosphofructokinase type A (PFKA) family. ATP-dependent PFK group I subfamily. Eukaryotic two domain clade 'E' sub-subfamily. Homo- and heterotetramers. Phosphofructokinase (PFK) enzyme functions as a tetramer composed of different combinations of 3 types of subunits, called PFKM (where M stands for Muscle), PFKL (Liver) and PFKP (Platelet). The composition of the PFK tetramer differs according to the tissue type it is present in. In muscles, it is composed of 4 PFKM subunits (also called M4). In the liver, the predominant form is a tetramer of PFKL subunits (L4). In erythrocytes, both PFKM and PFKL subunits randomly tetramerize to form M4, L4 and other combinations (ML3, M2L2, M3L). The kinetic and regulatory properties of the tetrameric enzyme are dependent on the subunit composition, hence can vary across tissues. Interacts (via C-terminus) with HK1 (via N-terminal spermatogenic cell-specific region). Requires Mg(2+) as cofactor. Post-translationally, glcNAcylation decreases enzyme activity.

Its subcellular location is the cytoplasm. It catalyses the reaction beta-D-fructose 6-phosphate + ATP = beta-D-fructose 1,6-bisphosphate + ADP + H(+). It participates in carbohydrate degradation; glycolysis; D-glyceraldehyde 3-phosphate and glycerone phosphate from D-glucose: step 3/4. Its activity is regulated as follows. Allosterically activated by ADP, AMP, or fructose 2,6-bisphosphate, and allosterically inhibited by ATP or citrate. Functionally, catalyzes the phosphorylation of D-fructose 6-phosphate to fructose 1,6-bisphosphate by ATP, the first committing step of glycolysis. This Homo sapiens (Human) protein is ATP-dependent 6-phosphofructokinase, muscle type (PFKM).